We begin with the raw amino-acid sequence, 149 residues long: DnaJ homolog subfamily C member 24 (149 aa).

In terms of domain architecture, J spans 11–82; it reads DWYSILGADP…ETKREYDLQR (72 aa). The DPH-type MB domain occupies 93-148; that stretch reads VDAQVYLEEMSWNEGDHSFYLSCRCGGKYSVSKDEAEEVSLISCDTCSLIIELLHY. Positions 115, 117, 136, and 139 each coordinate Zn(2+).

This sequence belongs to the DPH4 family. In terms of assembly, monomer and homooligomer. Iron binding promotes oligomerization.

It localises to the cytoplasm. Its subcellular location is the cytoskeleton. It functions in the pathway protein modification; peptidyl-diphthamide biosynthesis. Stimulates the ATPase activity of several Hsp70-type chaperones. This ability is enhanced by iron-binding. The iron-bound form is redox-active and can function as electron carrier. Plays a role in the diphthamide biosynthesis, a post-translational modification of histidine which occurs in translation elongation factor 2 (EEF2) which can be ADP-ribosylated by diphtheria toxin and by Pseudomonas exotoxin A (Eta). This Homo sapiens (Human) protein is DnaJ homolog subfamily C member 24.